Consider the following 226-residue polypeptide: N-(5'-phosphoribosyl)anthranilate isomerase (226 aa).

The protein belongs to the TrpF family.

The enzyme catalyses N-(5-phospho-beta-D-ribosyl)anthranilate = 1-(2-carboxyphenylamino)-1-deoxy-D-ribulose 5-phosphate. Its pathway is amino-acid biosynthesis; L-tryptophan biosynthesis; L-tryptophan from chorismate: step 3/5. This Methanothermobacter marburgensis (strain ATCC BAA-927 / DSM 2133 / JCM 14651 / NBRC 100331 / OCM 82 / Marburg) (Methanobacterium thermoautotrophicum) protein is N-(5'-phosphoribosyl)anthranilate isomerase (trpF).